The following is a 428-amino-acid chain: MTIVEDAKKGIITEEMKIVAKDEGLDPEFIRRGIAAGRIVIPTSPYRQVKLCGLGEGLRTKINASIGVSSDIVDDEMEVKKAIAAEKAGADTLMELGTGGDFLGIRKKVIDSISLSVGSVPLYQAFIEAARKYGSIVHMTEDELFKATEDQAKLGTNFMAIHTGVNNITLDRLKAHGRYGGLCSRGGAFMSAWMMHNEKENPLYSQFDYLVEILKEHEVVLSTGNGMRAGATHDATDRAQIQELIINTELGQRAHDAGLQVIIEGPGHIPLDQIETNVKIMKEMSGHKPFYMLGPLATDIAPGYDHIVTAIGASLSASYGCDFLCYVTPAEHLALPNIEDVITGVKTSKIAAHIGDMVKYPERARQWDLDMGRARRDLDWEKMYSLALDPEHARAVRNSRAPEDSDACTMCGNFCALKIVNQNYNLAK.

Residues M94, Y123, H162, 184–186 (SRG), 225–228 (NGMR), and E264 contribute to the substrate site. H268 is a binding site for Zn(2+). A substrate-binding site is contributed by Y291. Zn(2+) is bound at residue H332. [4Fe-4S] cluster is bound by residues C408, C411, and C415.

Belongs to the ThiC family. [4Fe-4S] cluster is required as a cofactor.

The catalysed reaction is 5-amino-1-(5-phospho-beta-D-ribosyl)imidazole + S-adenosyl-L-methionine = 4-amino-2-methyl-5-(phosphooxymethyl)pyrimidine + CO + 5'-deoxyadenosine + formate + L-methionine + 3 H(+). It participates in cofactor biosynthesis; thiamine diphosphate biosynthesis. Its function is as follows. Catalyzes the synthesis of the hydroxymethylpyrimidine phosphate (HMP-P) moiety of thiamine from aminoimidazole ribotide (AIR) in a radical S-adenosyl-L-methionine (SAM)-dependent reaction. The chain is Phosphomethylpyrimidine synthase 2 from Methanosarcina mazei (strain ATCC BAA-159 / DSM 3647 / Goe1 / Go1 / JCM 11833 / OCM 88) (Methanosarcina frisia).